The following is a 973-amino-acid chain: E3 ubiquitin-protein ligase BRE1A (973 aa).

A disordered region spans residues 1 to 37 (MSGIGNKRAAGEPGTSMPPEKKTAVEDSGTTVETIKL). Position 21 is an N6-acetyllysine (Lys21). Ser41 bears the Phosphoserine mark. Positions 43-90 (TEELDIRTLQSKNRKLAEMLDQRQAIEDELREHIEKLERRQATDDASL) form a coiled coil. The disordered stretch occupies residues 128–153 (VVPEPEPDSDSNQERKDDRERGDGQE). Ser136 and Ser138 each carry phosphoserine. A compositionally biased stretch (basic and acidic residues) spans 139–151 (NQERKDDRERGDG). Coiled-coil stretches lie at residues 168 to 378 (EEME…VKET) and 429 to 896 (SLHK…TTKK). 2 positions are modified to N6-acetyllysine: Lys348 and Lys510. Residues 507-620 (DLNKTRLRSG…GKHDDGRKKE (114 aa)) form a disordered region. Ser522 bears the Phosphoserine mark. Composition is skewed to basic and acidic residues over residues 527-544 (EDPKDEPTELKQDSEDLA) and 553-620 (SQED…RKKE). Ser560 bears the Phosphoserine mark. An RING-type zinc finger spans residues 920–959 (CPCCNMRKKDAVLTKCFHVFCFECVKTRYDTRQRKCPKCN).

Belongs to the BRE1 family. As to quaternary structure, component of the RNF20/40 complex (also known as BRE1 complex) probably composed of 2 copies of RNF20/BRE1A and 2 copies of RNF40/BRE1B. Interacts with UBE2E1/UBCH6. Interacts with p53/TP53 and WAC. Interacts with PAF1; the interaction mediates the association of the PAF1 and RNF20/40 complexes which is a prerequsite for recruitment of UBE2A/B. Interacts with PA2G4. Interacts with FBXL19.

The protein localises to the nucleus. It catalyses the reaction S-ubiquitinyl-[E2 ubiquitin-conjugating enzyme]-L-cysteine + [acceptor protein]-L-lysine = [E2 ubiquitin-conjugating enzyme]-L-cysteine + N(6)-ubiquitinyl-[acceptor protein]-L-lysine.. The protein operates within protein modification; protein ubiquitination. In terms of biological role, component of the RNF20/40 E3 ubiquitin-protein ligase complex that mediates monoubiquitination of 'Lys-120' of histone H2B (H2BK120ub1). H2BK120ub1 gives a specific tag for epigenetic transcriptional activation and is also prerequisite for histone H3 'Lys-4' and 'Lys-79' methylation (H3K4me and H3K79me, respectively). It thereby plays a central role in histone code and gene regulation. The RNF20/40 complex forms a H2B ubiquitin ligase complex in cooperation with the E2 enzyme UBE2A or UBE2B; reports about the cooperation with UBE2E1/UBCH are contradictory. Required for transcriptional activation of Hox genes. Recruited to the MDM2 promoter, probably by being recruited by p53/TP53, and thereby acts as a transcriptional coactivator. Mediates the polyubiquitination of PA2G4 leading to its proteasome-mediated degradation. This chain is E3 ubiquitin-protein ligase BRE1A (Rnf20), found in Mus musculus (Mouse).